A 675-amino-acid chain; its full sequence is UvrABC system protein B (675 aa).

The Helicase ATP-binding domain occupies 32–417 (EGLSDGLAYQ…EHAGQVVEQV (386 aa)). An ATP-binding site is contributed by 45–52 (GVTGSGKT). The short motif at 98 to 121 (YYDYYQPEAYVPSRDLFIEKDSAI) is the Beta-hairpin element. The 167-residue stretch at 436-602 (QVDDLMSEIN…QIKKQVKDII (167 aa)) folds into the Helicase C-terminal domain. The 36-residue stretch at 634-669 (IKEIAKLEKAMQQAARDLQFEEAAVLRDRIRNIKEN) folds into the UVR domain.

The protein belongs to the UvrB family. In terms of assembly, forms a heterotetramer with UvrA during the search for lesions. Interacts with UvrC in an incision complex.

It is found in the cytoplasm. In terms of biological role, the UvrABC repair system catalyzes the recognition and processing of DNA lesions. A damage recognition complex composed of 2 UvrA and 2 UvrB subunits scans DNA for abnormalities. Upon binding of the UvrA(2)B(2) complex to a putative damaged site, the DNA wraps around one UvrB monomer. DNA wrap is dependent on ATP binding by UvrB and probably causes local melting of the DNA helix, facilitating insertion of UvrB beta-hairpin between the DNA strands. Then UvrB probes one DNA strand for the presence of a lesion. If a lesion is found the UvrA subunits dissociate and the UvrB-DNA preincision complex is formed. This complex is subsequently bound by UvrC and the second UvrB is released. If no lesion is found, the DNA wraps around the other UvrB subunit that will check the other stand for damage. The sequence is that of UvrABC system protein B from Neisseria gonorrhoeae.